Reading from the N-terminus, the 516-residue chain is Katanin p60 ATPase-containing subunit A1 (516 aa).

The segment at 75–212 (GFKSEPAAPE…DEKKFDPAGY (138 aa)) is disordered. Basic and acidic residues-rich tracts occupy residues 133-143 (ARKDPPRRSEP) and 155-167 (RGGRGPSDRRGDA). The span at 168-178 (RSGGGGRGGAR) shows a compositional bias: gly residues. Basic and acidic residues predominate over residues 179–212 (GSDKDKNRGGKSDKDKKAPSGEEGDEKKFDPAGY). 274–281 (GPPGTGKT) contributes to the ATP binding site.

The protein belongs to the AAA ATPase family. Katanin p60 subunit A1 subfamily. As to quaternary structure, can homooligomerize into hexameric rings, which may be promoted by interaction with microtubules. Interacts with KATNB1, which may serve as a targeting subunit.

Its subcellular location is the cytoplasm. The protein localises to the cytoskeleton. The protein resides in the microtubule organizing center. It localises to the centrosome. It is found in the spindle pole. It catalyses the reaction n ATP + n H2O + a microtubule = n ADP + n phosphate + (n+1) alpha/beta tubulin heterodimers.. ATPase activity is stimulated by microtubules, which promote homooligomerization. ATP-dependent microtubule severing is stimulated by interaction with KATNB1. Functionally, catalytic subunit of a complex which severs microtubules in an ATP-dependent manner. Microtubule severing may promote rapid reorganization of cellular microtubule arrays and the release of microtubules from the centrosome following nucleation. In mitotic spindles this could allow depolymerization of the microtubule end proximal to the centrosome, and subsequent poleward microtubule flux. The protein is Katanin p60 ATPase-containing subunit A1 of Strongylocentrotus purpuratus (Purple sea urchin).